The following is a 132-amino-acid chain: S-protein homolog 15 (132 aa).

The N-terminal stretch at 1 to 20 is a signal peptide; that stretch reads MSRLIFFILVTAIYFVGNEA.

Belongs to the plant self-incompatibility (S1) protein family.

It localises to the secreted. The chain is S-protein homolog 15 from Arabidopsis thaliana (Mouse-ear cress).